We begin with the raw amino-acid sequence, 302 residues long: Negative regulator of the PHO system (302 aa).

Residues Phe6 to Phe296 form the Protein kinase domain. ATP is bound by residues Leu12–Val20 and Lys35. The active-site Proton acceptor is Asp132.

It belongs to the protein kinase superfamily. CMGC Ser/Thr protein kinase family. CDC2/CDKX subfamily. Interacts with a number of cyclins.

It carries out the reaction L-seryl-[protein] + ATP = O-phospho-L-seryl-[protein] + ADP + H(+). The enzyme catalyses L-threonyl-[protein] + ATP = O-phospho-L-threonyl-[protein] + ADP + H(+). Functionally, when phosphate concentrations are high it phosphorylates the PHO4 transcription factor thus establishing repression. This Candida glabrata (strain ATCC 2001 / BCRC 20586 / JCM 3761 / NBRC 0622 / NRRL Y-65 / CBS 138) (Yeast) protein is Negative regulator of the PHO system (PHO85).